The following is a 336-amino-acid chain: Homoserine dehydrogenase (336 aa).

Phe8 is a binding site for NADPH. NAD(+) is bound by residues Ala10, Ile11, and Thr94. NADPH contacts are provided by Ile11, Thr94, and Lys123. NADP(+) contacts are provided by Ile11, Thr94, and Lys123. Na(+)-binding residues include Glu147, Val150, and Gly152. NADP(+)-binding residues include Gly205 and Glu208. 2 residues coordinate L-homoserine: Glu208 and Asp219. Lys223 (proton donor) is an active-site residue. Gly315 contributes to the NADPH binding site. Position 315 (Gly315) interacts with NAD(+). Position 315 (Gly315) interacts with NADP(+).

This sequence belongs to the homoserine dehydrogenase family. The cofactor is a metal cation.

It catalyses the reaction L-homoserine + NADP(+) = L-aspartate 4-semialdehyde + NADPH + H(+). It carries out the reaction L-homoserine + NAD(+) = L-aspartate 4-semialdehyde + NADH + H(+). It functions in the pathway amino-acid biosynthesis; L-methionine biosynthesis via de novo pathway; L-homoserine from L-aspartate: step 3/3. It participates in amino-acid biosynthesis; L-threonine biosynthesis; L-threonine from L-aspartate: step 3/5. Its function is as follows. Catalyzes the conversion of L-aspartate-beta-semialdehyde (L-Asa) to L-homoserine (L-Hse), the third step in the biosynthesis of threonine and methionine from aspartate. The sequence is that of Homoserine dehydrogenase (hom) from Methanocaldococcus jannaschii (strain ATCC 43067 / DSM 2661 / JAL-1 / JCM 10045 / NBRC 100440) (Methanococcus jannaschii).